The sequence spans 1771 residues: Fatty acid synthase alpha subunit pkiB (1771 aa).

A compositionally biased stretch (polar residues) spans 108 to 130; the sequence is SQPTQPQFEPTSPSHLTKRSPSP. The disordered stretch occupies residues 108–133; it reads SQPTQPQFEPTSPSHLTKRSPSPSKA. Residues 143–221 enclose the Carrier domain; that stretch reads ELTLQAGHVI…ESFQPEFSGI (79 aa). S181 carries the post-translational modification O-(pantetheine 4'-phosphoryl)serine. The tract at residues 575–771 is beta-ketoacyl reductase; sequence HKAVLVTGAG…CGAVIGWTRG (197 aa). Residues 1011-1531 enclose the Ketosynthase family 3 (KS3) domain; the sequence is KELLHEVAVE…QKGAINIMVS (521 aa). Active-site for beta-ketoacyl synthase activity residues include C1197, H1416, and H1457. 3 residues coordinate Mg(2+): D1650, V1651, and E1652. Acetyl-CoA contacts are provided by residues 1650–1652, Y1676, S1686, 1695–1705, 1719–1722, and 1753–1755; these read DVE, EAAFKSLQTTS, EVGG, and ISH. Positions 1754 and 1755 each coordinate Mg(2+).

The protein belongs to the thiolase-like superfamily. Fungal fatty acid synthetase subunit alpha family. In terms of assembly, [Alpha(6)beta(6)] hexamers of two multifunctional subunits (alpha and beta).

It catalyses the reaction acetyl-CoA + n malonyl-CoA + 2n NADPH + 4n H(+) = a long-chain-acyl-CoA + n CoA + n CO2 + 2n NADP(+).. The catalysed reaction is a fatty acyl-[ACP] + malonyl-[ACP] + H(+) = a 3-oxoacyl-[ACP] + holo-[ACP] + CO2. It carries out the reaction a (3R)-hydroxyacyl-[ACP] + NADP(+) = a 3-oxoacyl-[ACP] + NADPH + H(+). Its pathway is secondary metabolite biosynthesis. Fatty acid synthase alpha subunit; part of the pki gene cluster that mediates the biosynthesis of 2,4-dihydroxy-3-methyl-6-(2-oxoundecyl)benzaldehyde. The first step in the pathway is the generation of the decanoyl starter unit by the FAS composed of subunits pkiB and pkiC, which is then transferred directly from the FAS to the SAT domain of the non-reducing polyketide synthase pkiA. PkiA condenses the decanoyyl starter unit with 4 malonyl-CoA units and performs one methylation step to yield 2,4-dihydroxy-3-methyl-6-(2-oxoundecyl)benzaldehyde. The protein is Fatty acid synthase alpha subunit pkiB of Emericella nidulans (strain FGSC A4 / ATCC 38163 / CBS 112.46 / NRRL 194 / M139) (Aspergillus nidulans).